The chain runs to 347 residues: NADH-ubiquinone oxidoreductase chain 2 (347 aa).

Transmembrane regions (helical) follow at residues 3 to 23 (PPIL…VMLS), 25 to 45 (HWLL…PILM), 66 to 86 (ASML…QWMI), 111 to 131 (FHFW…MILL), 149 to 169 (INTD…GWGG), 178 to 198 (IMAY…IYNP), 201 to 221 (MFLN…LFML), 237 to 257 (IPLI…LPPL), 274 to 294 (DMIV…YFYM), and 325 to 345 (LLPP…MMSI).

It belongs to the complex I subunit 2 family. As to quaternary structure, core subunit of respiratory chain NADH dehydrogenase (Complex I) which is composed of 45 different subunits. Interacts with TMEM242.

The protein resides in the mitochondrion inner membrane. It catalyses the reaction a ubiquinone + NADH + 5 H(+)(in) = a ubiquinol + NAD(+) + 4 H(+)(out). Core subunit of the mitochondrial membrane respiratory chain NADH dehydrogenase (Complex I) which catalyzes electron transfer from NADH through the respiratory chain, using ubiquinone as an electron acceptor. Essential for the catalytic activity and assembly of complex I. The chain is NADH-ubiquinone oxidoreductase chain 2 from Vulpes vulpes (Red fox).